A 256-amino-acid polypeptide reads, in one-letter code: Chalcone--flavanone isomerase (256 aa).

Substrate-binding residues include Thr-51, Asn-116, and Ser-193. Residues Asn-219 to Val-256 are disordered. Basic and acidic residues predominate over residues Glu-228–Val-256.

This sequence belongs to the chalcone isomerase family. In terms of tissue distribution, nodules.

It catalyses the reaction a chalcone = a flavanone.. Its pathway is secondary metabolite biosynthesis; flavonoid biosynthesis. Catalyzes the intramolecular cyclization of bicyclic chalcones into tricyclic (S)-flavanones. Responsible for the isomerization of 4,2',4',6'-tetrahydroxychalcone (also termed chalcone) into naringenin. The sequence is that of Chalcone--flavanone isomerase (CHI) from Elaeagnus umbellata (Autumn olive).